A 1710-amino-acid chain; its full sequence is Ankyrin repeat domain-containing protein 26 (1710 aa).

Positions 1 to 41 are disordered; sequence MKKIFSKKGESPLGSFARRQRSSAGGGGEPGEGAYSQPGYH. Phosphoserine occurs at positions 11 and 15. 5 ANK repeats span residues 45–75, 79–108, 112–141, 145–174, and 178–207; these read RDLG…GLND, MNRT…QLNV, ENRT…DPNL, HGNT…NIEA, and DDLT…NVNA. Positions 222–274 are disordered; the sequence is KEERIPKHSSQNSNSVDESSEDSLSRLSGKPGVDDSWPTSDDEDLNFDTKNVP. 4 positions are modified to phosphoserine: Ser-241, Ser-261, Ser-489, and Ser-530. Residues 504–630 form a disordered region; the sequence is DSVPNKAGGM…EKRTSKESVN (127 aa). Residues 529 to 566 are a coiled coil; that stretch reads ASEEEQEREGSENNQPQVEEERKKHRNNEMEVSANIHD. The segment covering 569–580 has biased composition (acidic residues); it reads TDDAEDDDDDDG. Basic and acidic residues-rich tracts occupy residues 586 to 602 and 613 to 626; these read KSGE…ENKE and KEVK…RTSK. Phosphoserine is present on Ser-631. A compositionally biased stretch (acidic residues) spans 650-660; the sequence is DSSLSEIDEDE. A disordered region spans residues 650–698; that stretch reads DSSLSEIDEDEGRPTKKTSNEKNKVKNQIQSMDDVDDLTQSSETASEDC. The segment covering 661–673 has biased composition (basic and acidic residues); the sequence is GRPTKKTSNEKNK. 4 coiled-coil regions span residues 743–873, 905–1472, 1517–1587, and 1649–1674; these read KNHC…NARM, EEEK…MVEL, NNFA…NTKL, and LSKM…LESG. The tract at residues 892-912 is disordered; the sequence is AQKKMNSENSHSHEEEKDLSH.

As to quaternary structure, interacts with TRIO. Interacts with GPS2. Interacts with CCDC85B. Interacts with HMMR.

Functionally, acts as a regulator of adipogenesis. Involved in the regulation of the feeding behavior. The chain is Ankyrin repeat domain-containing protein 26 from Homo sapiens (Human).